The chain runs to 214 residues: Peroxiredoxin 2 (214 aa).

The region spanning 1–157 (MKLYQKFPET…LLRITKAMIV (157 aa)) is the Thioredoxin domain. Cysteine 45 (cysteine sulfenic acid (-SOH) intermediate) is an active-site residue. Arginine 120 contacts substrate.

It belongs to the peroxiredoxin family. Prx6 subfamily. Homodecamer. Pentamer of dimers that assemble into a ring structure.

It localises to the cytoplasm. The enzyme catalyses a hydroperoxide + [thioredoxin]-dithiol = an alcohol + [thioredoxin]-disulfide + H2O. Its function is as follows. Thiol-specific peroxidase that catalyzes the reduction of hydrogen peroxide and organic hydroperoxides to water and alcohols, respectively. Plays a role in cell protection against oxidative stress by detoxifying peroxides. In Sulfuracidifex metallicus (Sulfolobus metallicus), this protein is Peroxiredoxin 2.